Consider the following 187-residue polypeptide: Large ribosomal subunit protein uL22 (187 aa).

Residues 155 to 187 (DAVSRAAPTDDAPAKKKLSKKKLARQKEKMMRE) are disordered. Residues 169 to 178 (KKKLSKKKLA) show a composition bias toward basic residues.

This sequence belongs to the universal ribosomal protein uL22 family.

This chain is Large ribosomal subunit protein uL22 (RpL17), found in Lonomia obliqua (Moth).